The sequence spans 287 residues: Bifunctional protein FolD (287 aa).

NADP(+)-binding positions include G171–S173, I196, and I237.

Belongs to the tetrahydrofolate dehydrogenase/cyclohydrolase family. In terms of assembly, homodimer.

It catalyses the reaction (6R)-5,10-methylene-5,6,7,8-tetrahydrofolate + NADP(+) = (6R)-5,10-methenyltetrahydrofolate + NADPH. It carries out the reaction (6R)-5,10-methenyltetrahydrofolate + H2O = (6R)-10-formyltetrahydrofolate + H(+). It participates in one-carbon metabolism; tetrahydrofolate interconversion. Catalyzes the oxidation of 5,10-methylenetetrahydrofolate to 5,10-methenyltetrahydrofolate and then the hydrolysis of 5,10-methenyltetrahydrofolate to 10-formyltetrahydrofolate. This Methanosarcina mazei (strain ATCC BAA-159 / DSM 3647 / Goe1 / Go1 / JCM 11833 / OCM 88) (Methanosarcina frisia) protein is Bifunctional protein FolD.